Here is a 317-residue protein sequence, read N- to C-terminus: Glucokinase (317 aa).

6–12 (GVDIGGT) provides a ligand contact to ATP.

This sequence belongs to the ROK (NagC/XylR) family. As to quaternary structure, homooligomer (possibly a homotetramer). Alternatively, it may form a heterotetramer of two glucokinase subunits with two ORF2 (AC P40182) proteins.

It is found in the cytoplasm. The catalysed reaction is D-glucose + ATP = D-glucose 6-phosphate + ADP + H(+). In terms of biological role, a probable glucose kinase. Required for glucose repression of many different genes, restores glucose kinase activity in E.coli glk mutants. In Streptomyces coelicolor (strain ATCC BAA-471 / A3(2) / M145), this protein is Glucokinase (glkA).